The chain runs to 487 residues: UDP-N-acetylmuramate--L-alanine ligase (487 aa).

122–128 (GTHGKTS) contacts ATP.

The protein belongs to the MurCDEF family.

It is found in the cytoplasm. The enzyme catalyses UDP-N-acetyl-alpha-D-muramate + L-alanine + ATP = UDP-N-acetyl-alpha-D-muramoyl-L-alanine + ADP + phosphate + H(+). The protein operates within cell wall biogenesis; peptidoglycan biosynthesis. In terms of biological role, cell wall formation. The chain is UDP-N-acetylmuramate--L-alanine ligase from Corynebacterium urealyticum (strain ATCC 43042 / DSM 7109).